Consider the following 95-residue polypeptide: MTMFVESINDVLFLVDFFTIILPALTAIGIAFLLRECRAGEQWKSKRTDEHQTVFHINRTDFLIIIYHRITTWIRKVFRMNSPVNDEEDAGSLLL.

Residues 12-32 form a helical membrane-spanning segment; sequence LFLVDFFTIILPALTAIGIAF. A crucial for elongation arrest region spans residues 86 to 89; sequence DEED.

The protein localises to the cell membrane. Sensor protein that up-regulates translation of the secondary membrane protein insertase (MisCB/YqjG) when activity of the primary membrane protein insertase (MisCA/SpoIIIJ) is limited. Acts as a ribosome-nascent chain complex. When the primary membrane protein insertase activity or level is reduced, the membrane insertion of MifM is impaired, which induces arrest of MifM translation and unfolding of the mRNA hairpin. Unfolding leads to translation of the downstream gene, which encodes the secondary membrane protein insertase MisCB/YqjG. Translation arrest of MifM is mediated by interaction of its C-terminal domain with the ribosomal polypeptide exit tunnel. Undergoes multisite stalling, which may allow a sufficient duration of ribosomal stalling and consequently sufficient levels of MisCB/YqjG. In Bacillus subtilis (strain 168), this protein is Membrane protein insertion and folding monitor (mifM).